Here is a 285-residue protein sequence, read N- to C-terminus: MRVLVITGLSGSGKSTAVRVLEDEGFFCVDNLPVLLFPTIIDLVCRSGENVAGVALVMDIRGRDFIKGFEKVFQQISEAGHTVEVIFFDATDEVLVRRFSETRRRHPALESGSVPEGIRYEREQLAGLRRLATHVIDTSELNVHQLKELVHSRIKGESGTRPLTIHLQSFGYRFGIPLESDIVMDVRFLPNPHFVPELKAGTGLDENVRTYVLEKPETRQFLERFMDLLEFLVPSYQREGKSYLTVSVGCTGGRHRSVAIVEELRAFFAGLGLVVKVSHRDKEKG.

Glycine 8 to serine 15 is an ATP binding site. Aspartate 59–glycine 62 lines the GTP pocket.

It belongs to the RapZ-like family.

Its function is as follows. Displays ATPase and GTPase activities. The polypeptide is Nucleotide-binding protein GSU1884 (Geobacter sulfurreducens (strain ATCC 51573 / DSM 12127 / PCA)).